Reading from the N-terminus, the 251-residue chain is Flap endonuclease Xni (251 aa).

Asp104 lines the Mg(2+) pocket. Positions 160–249 constitute a 5'-3' exonuclease domain; sequence VLPRQLPDYW…IDGNLQQLRL (90 aa). Leu171, Ala172, Pro180, Val182, and Ile185 together coordinate K(+). The interval 184-189 is interaction with DNA; it reads GIGPKS.

Belongs to the Xni family. Mg(2+) is required as a cofactor. Requires K(+) as cofactor.

Its function is as follows. Has flap endonuclease activity. During DNA replication, flap endonucleases cleave the 5'-overhanging flap structure that is generated by displacement synthesis when DNA polymerase encounters the 5'-end of a downstream Okazaki fragment. This chain is Flap endonuclease Xni, found in Salmonella heidelberg (strain SL476).